The following is a 253-amino-acid chain: 3-dehydroquinate dehydratase (253 aa).

3-dehydroquinate is bound by residues 46–48 (EWR) and arginine 82. Histidine 143 serves as the catalytic Proton donor/acceptor. Lysine 170 serves as the catalytic Schiff-base intermediate with substrate. 3 residues coordinate 3-dehydroquinate: arginine 213, serine 232, and glutamine 236.

The protein belongs to the type-I 3-dehydroquinase family. Homodimer.

The catalysed reaction is 3-dehydroquinate = 3-dehydroshikimate + H2O. It functions in the pathway metabolic intermediate biosynthesis; chorismate biosynthesis; chorismate from D-erythrose 4-phosphate and phosphoenolpyruvate: step 3/7. Its function is as follows. Involved in the third step of the chorismate pathway, which leads to the biosynthesis of aromatic amino acids. Catalyzes the cis-dehydration of 3-dehydroquinate (DHQ) and introduces the first double bond of the aromatic ring to yield 3-dehydroshikimate. The chain is 3-dehydroquinate dehydratase from Syntrophotalea carbinolica (strain DSM 2380 / NBRC 103641 / GraBd1) (Pelobacter carbinolicus).